The following is a 293-amino-acid chain: Ribosomal protein L11 methyltransferase (293 aa).

Residues threonine 145, glycine 166, aspartate 188, and asparagine 230 each contribute to the S-adenosyl-L-methionine site.

This sequence belongs to the methyltransferase superfamily. PrmA family.

The protein localises to the cytoplasm. The enzyme catalyses L-lysyl-[protein] + 3 S-adenosyl-L-methionine = N(6),N(6),N(6)-trimethyl-L-lysyl-[protein] + 3 S-adenosyl-L-homocysteine + 3 H(+). Its function is as follows. Methylates ribosomal protein L11. In Salmonella dublin (strain CT_02021853), this protein is Ribosomal protein L11 methyltransferase.